The following is a 675-amino-acid chain: Sodium/myo-inositol cotransporter 2 (675 aa).

Residues 1–27 (MESGTSSPQPPQLDPLDAFPQKGLEPG) are Extracellular-facing. The helical transmembrane segment at 28 to 48 (DIAVLVLYFLFVLAVGLWSTV) threads the bilayer. Topologically, residues 49-65 (KTKRDTVKGYFLAGGDM) are cytoplasmic. The helical transmembrane segment at 66-88 (VWWPVGASLFASNVGSGHFIGLA) threads the bilayer. Topologically, residues 89–102 (GSGAATGISVSAYE) are extracellular. A helical transmembrane segment spans residues 103–123 (LNGLFSVLMLAWIFLPIYIAG). Topologically, residues 124 to 135 (QVTTMPEYLRKR) are cytoplasmic. The helical transmembrane segment at 136–156 (FGGIRIPIILAVLYLFIYIFT) threads the bilayer. At 157-180 (KISVDMYAGAIFIQQSLHLDLYLA) the chain is on the extracellular side. A helical membrane pass occupies residues 181–201 (IVGLLAITAVYTVAGGLAAVI). Residues 202 to 208 (YTDALQT) lie on the Cytoplasmic side of the membrane. Residues 209–229 (LIMLIGALTLMGYSFAAVGGM) form a helical membrane-spanning segment. Residues 230-272 (EGLKEKYFLALASNRSENSSCGLPREDAFHIFRDPLTSDLPWP) lie on the Extracellular side of the membrane. A helical transmembrane segment spans residues 273 to 293 (GVLFGMSIPSLWYWCTDQVIV). Residues 294–308 (QRTLAAKNLSHAKGG) lie on the Cytoplasmic side of the membrane. The helical transmembrane segment at 309–329 (ALMAAYLKVLPLFIMVFPGMV) threads the bilayer. At 330-375 (SRILFPDQVACADPEICQKICSNPSGCSDIAYPKLVLELLPTGLRG) the chain is on the extracellular side. The chain crosses the membrane as a helical span at residues 376 to 396 (LMMAVMVAALMSSLTSIFNSA). Residues 397-418 (STIFTMDLWNHLRPRASEKELM) lie on the Cytoplasmic side of the membrane. The helical transmembrane segment at 419-439 (IVGRVFVLLLVLVSILWIPVV) threads the bilayer. Residues 440 to 446 (QASQGGQ) are Extracellular-facing. A helical transmembrane segment spans residues 447-467 (LFIYIQSISSYLQPPVAVVFI). Residues 468–479 (MGCFWKRTNEKG) lie on the Cytoplasmic side of the membrane. A helical membrane pass occupies residues 480–500 (AFWGLISGLLLGLVRLVLDFI). The Extracellular segment spans residues 501-521 (YVQPRCDQPDERPVLVKSIHY). A helical membrane pass occupies residues 522–542 (LYFSMILSTVTLITVSTVSWF). At 543-654 (TEPPSKEMVS…SLEENPLVKT (112 aa)) the chain is on the cytoplasmic side. A helical membrane pass occupies residues 655 to 675 (LLDVNLIFCVSCAIFIWGYFA).

It belongs to the sodium:solute symporter (SSF) (TC 2.A.21) family. In terms of tissue distribution, highest expression in heart, skeletal muscle, kidney, liver and placenta. Weaker expression in brain, colon, spleen, lung and peripheral blood leukocytes.

It localises to the membrane. The protein localises to the apical cell membrane. The catalysed reaction is myo-inositol(out) + 2 Na(+)(out) = myo-inositol(in) + 2 Na(+)(in). It catalyses the reaction 1D-chiro-inositol(out) + 2 Na(+)(out) = 1D-chiro-inositol(in) + 2 Na(+)(in). It carries out the reaction D-glucose(out) + 2 Na(+)(out) = D-glucose(in) + 2 Na(+)(in). The enzyme catalyses D-xylose(out) + 2 Na(+)(out) = D-xylose(in) + 2 Na(+)(in). With respect to regulation, MI transport activity inhibited by D-chiro-inositol (DCI), phlorizin (Pz) and sodium (Na(+)). Insulin increases D-chiro-inositol uptake. Involved in the sodium-dependent cotransport of myo-inositol (MI) with a Na(+):MI stoichiometry of 2:1. Exclusively responsible for apical MI transport and absorption in intestine. Can also transport D-chiro-inositol (DCI) but not L-fucose. Exhibits stereospecific cotransport of both D-glucose and D-xylose. May induce apoptosis through the TNF-alpha, PDCD1 pathway. May play a role in the regulation of MI concentration in serum, involving reabsorption in at least the proximal tubule of the kidney. This chain is Sodium/myo-inositol cotransporter 2, found in Homo sapiens (Human).